Reading from the N-terminus, the 215-residue chain is Ribonuclease HII (215 aa).

In terms of domain architecture, RNase H type-2 spans 24 to 215 (GVVFGVDEVG…PIRQFYENVD (192 aa)). Residues Asp30, Glu31, and Asp125 each coordinate a divalent metal cation.

Belongs to the RNase HII family. The cofactor is Mn(2+). It depends on Mg(2+) as a cofactor.

The protein localises to the cytoplasm. The catalysed reaction is Endonucleolytic cleavage to 5'-phosphomonoester.. Endonuclease that specifically degrades the RNA of RNA-DNA hybrids. The protein is Ribonuclease HII of Zymomonas mobilis subsp. mobilis (strain ATCC 31821 / ZM4 / CP4).